The primary structure comprises 326 residues: Putative replication protein B (326 aa).

The protein belongs to the ParB family.

This chain is Putative replication protein B, found in Sinorhizobium fredii (strain NBRC 101917 / NGR234).